A 314-amino-acid chain; its full sequence is Ribosomal RNA small subunit methyltransferase H (314 aa).

S-adenosyl-L-methionine-binding positions include 36–38 (GGH), D56, F81, D103, and Q110.

Belongs to the methyltransferase superfamily. RsmH family.

It is found in the cytoplasm. The catalysed reaction is cytidine(1402) in 16S rRNA + S-adenosyl-L-methionine = N(4)-methylcytidine(1402) in 16S rRNA + S-adenosyl-L-homocysteine + H(+). In terms of biological role, specifically methylates the N4 position of cytidine in position 1402 (C1402) of 16S rRNA. The chain is Ribosomal RNA small subunit methyltransferase H from Shewanella sediminis (strain HAW-EB3).